The primary structure comprises 216 residues: tRNA (guanine-N(7)-)-methyltransferase (216 aa).

4 residues coordinate S-adenosyl-L-methionine: Glu-43, Asp-68, Asn-95, and Asn-117. Substrate is bound by residues Asp-153 and 190–193 (TEYE).

It belongs to the class I-like SAM-binding methyltransferase superfamily. TrmB family.

The catalysed reaction is guanosine(46) in tRNA + S-adenosyl-L-methionine = N(7)-methylguanosine(46) in tRNA + S-adenosyl-L-homocysteine. It participates in tRNA modification; N(7)-methylguanine-tRNA biosynthesis. Catalyzes the formation of N(7)-methylguanine at position 46 (m7G46) in tRNA. This Desulfitobacterium hafniense (strain Y51) protein is tRNA (guanine-N(7)-)-methyltransferase.